We begin with the raw amino-acid sequence, 80 residues long: Exodeoxyribonuclease 7 small subunit (80 aa).

It belongs to the XseB family. Heterooligomer composed of large and small subunits.

Its subcellular location is the cytoplasm. It carries out the reaction Exonucleolytic cleavage in either 5'- to 3'- or 3'- to 5'-direction to yield nucleoside 5'-phosphates.. In terms of biological role, bidirectionally degrades single-stranded DNA into large acid-insoluble oligonucleotides, which are then degraded further into small acid-soluble oligonucleotides. The chain is Exodeoxyribonuclease 7 small subunit from Pseudoalteromonas translucida (strain TAC 125).